Consider the following 315-residue polypeptide: 4-hydroxy-3-methylbut-2-enyl diphosphate reductase (315 aa).

[4Fe-4S] cluster is bound at residue cysteine 12. (2E)-4-hydroxy-3-methylbut-2-enyl diphosphate contacts are provided by histidine 41 and histidine 74. Dimethylallyl diphosphate contacts are provided by histidine 41 and histidine 74. The isopentenyl diphosphate site is built by histidine 41 and histidine 74. Cysteine 96 serves as a coordination point for [4Fe-4S] cluster. Histidine 124 serves as a coordination point for (2E)-4-hydroxy-3-methylbut-2-enyl diphosphate. Histidine 124 is a binding site for dimethylallyl diphosphate. Histidine 124 is an isopentenyl diphosphate binding site. Glutamate 126 acts as the Proton donor in catalysis. Threonine 168 is a binding site for (2E)-4-hydroxy-3-methylbut-2-enyl diphosphate. Cysteine 198 is a binding site for [4Fe-4S] cluster. (2E)-4-hydroxy-3-methylbut-2-enyl diphosphate contacts are provided by serine 226, serine 227, asparagine 228, and serine 270. Serine 226, serine 227, asparagine 228, and serine 270 together coordinate dimethylallyl diphosphate. 4 residues coordinate isopentenyl diphosphate: serine 226, serine 227, asparagine 228, and serine 270.

This sequence belongs to the IspH family. [4Fe-4S] cluster is required as a cofactor.

The enzyme catalyses isopentenyl diphosphate + 2 oxidized [2Fe-2S]-[ferredoxin] + H2O = (2E)-4-hydroxy-3-methylbut-2-enyl diphosphate + 2 reduced [2Fe-2S]-[ferredoxin] + 2 H(+). The catalysed reaction is dimethylallyl diphosphate + 2 oxidized [2Fe-2S]-[ferredoxin] + H2O = (2E)-4-hydroxy-3-methylbut-2-enyl diphosphate + 2 reduced [2Fe-2S]-[ferredoxin] + 2 H(+). The protein operates within isoprenoid biosynthesis; dimethylallyl diphosphate biosynthesis; dimethylallyl diphosphate from (2E)-4-hydroxy-3-methylbutenyl diphosphate: step 1/1. It participates in isoprenoid biosynthesis; isopentenyl diphosphate biosynthesis via DXP pathway; isopentenyl diphosphate from 1-deoxy-D-xylulose 5-phosphate: step 6/6. Functionally, catalyzes the conversion of 1-hydroxy-2-methyl-2-(E)-butenyl 4-diphosphate (HMBPP) into a mixture of isopentenyl diphosphate (IPP) and dimethylallyl diphosphate (DMAPP). Acts in the terminal step of the DOXP/MEP pathway for isoprenoid precursor biosynthesis. The sequence is that of 4-hydroxy-3-methylbut-2-enyl diphosphate reductase from Pseudomonas fluorescens (strain ATCC BAA-477 / NRRL B-23932 / Pf-5).